We begin with the raw amino-acid sequence, 516 residues long: MSNFYNNNPRRNTFRLTERIKKKPYQTLIVFILIFLFLYVFGPFGEKKSNNNNNNHPVSKTSSFTESLYTKFQTETFAYRANGDLKKYDISIITQFTVDRFDRIAMMADKWRAPISAAVYITSFKDIDEVFKLVRNSFAVTEFVDLHFLFANKTRYPVNNLRNLALRNARTEWCLLLDVDFISPLGMYDYLHSTLEKLDTSNNNNNNNNNNNNNNNNNNNNNNNNNNNNNNNENNDNDNGNNNNNNDNEKNFKKKQEDLKIDPNDFEGDLKAIEKLKRNGEKLYVKNLKKVLDGSENNLGKNINFNNNNNDNNNKDDGGGGGYYLNSDNSNINNNNKIAFVIPSFSSSISRFDFPDNKKDLLDFIKQDLIKEINSGVCPKCHGPTNYSRWYLSSEPYLVQYKWIYEPFLLYNRSQIHDYDERLKGYGFDKNSHTFGMAAAGFDFVVLPDAWIIHMNHVSKPWEGADTFNEQMFDCLSIVCESILPDAKSKNGYDPNAKLFNEPLKNNDNCLTREHW.

The Cytoplasmic segment spans residues 1–24 (MSNFYNNNPRRNTFRLTERIKKKP). The chain crosses the membrane as a helical; Signal-anchor for type II membrane protein span at residues 25–45 (YQTLIVFILIFLFLYVFGPFG). The Extracellular segment spans residues 46–516 (EKKSNNNNNN…NDNCLTREHW (471 aa)). Residue asparagine 152 is glycosylated (N-linked (GlcNAc...) asparagine). Residues 199 to 250 (DTSNNNNNNNNNNNNNNNNNNNNNNNNNNNNNNNENNDNDNGNNNNNNDNEK) are disordered. A compositionally biased stretch (low complexity) spans 202 to 246 (NNNNNNNNNNNNNNNNNNNNNNNNNNNNNNNENNDNDNGNNNNNN). 2 N-linked (GlcNAc...) asparagine glycosylation sites follow: asparagine 386 and asparagine 412.

It belongs to the glycosyltransferase 8 family. Highly divergent.

It is found in the membrane. May have a role in modulating cell adhesion and glycosylation. Essential for development. The sequence is that of Glycosyltransferase-like protein gnt15 (gnt15) from Dictyostelium discoideum (Social amoeba).